We begin with the raw amino-acid sequence, 337 residues long: tRNA N6-adenosine threonylcarbamoyltransferase (337 aa).

Fe cation-binding residues include histidine 111 and histidine 115. Substrate is bound by residues 134–138, aspartate 167, glycine 180, and asparagine 272; that span reads LVSGG. Aspartate 300 contacts Fe cation.

Belongs to the KAE1 / TsaD family. Fe(2+) is required as a cofactor.

The protein resides in the cytoplasm. It carries out the reaction L-threonylcarbamoyladenylate + adenosine(37) in tRNA = N(6)-L-threonylcarbamoyladenosine(37) in tRNA + AMP + H(+). Functionally, required for the formation of a threonylcarbamoyl group on adenosine at position 37 (t(6)A37) in tRNAs that read codons beginning with adenine. Is involved in the transfer of the threonylcarbamoyl moiety of threonylcarbamoyl-AMP (TC-AMP) to the N6 group of A37, together with TsaE and TsaB. TsaD likely plays a direct catalytic role in this reaction. This chain is tRNA N6-adenosine threonylcarbamoyltransferase, found in Shewanella sediminis (strain HAW-EB3).